Here is a 151-residue protein sequence, read N- to C-terminus: uncharacterized protein (151 aa).

Over residues 40–57 (QMNRRNSENNTFDASNVG) the composition is skewed to polar residues. The disordered stretch occupies residues 40–125 (QMNRRNSENN…KRQPHYAEPI (86 aa)). A compositionally biased stretch (low complexity) spans 83–110 (QRQNGRQHQHAGQQQPQHQHTQSQTRQT).

This is an uncharacterized protein from Bacillus subtilis (strain 168).